The chain runs to 1005 residues: MEAQQALVASKDGDMATLERLFEAGALRPDITDDLGAGLVHHATRAGHLDCVKFLVQRAKLPGNQQAHNGATPVHDAAATGNLAELCWLVRDAGCGLQDQDASGVSPLHLAARFGHPALVEWLLREGHAATLETLEGALPLHHAAVSGDLTCLKLLTAAHSSGVNQRTCSGASPLYLACQEGHLHLAQFLVKDCGADVRLRALDGMSSLHAAAAHGHYSLVVWLVTFTDIGLTARDNEGATALHFAARGGHTPILDRLLLMGAPIMRDSWGGTPLHDAAENGHMECCQTLLSHHVDPFLRDEDGYTAIDLAEYHGHQDCAQFLREMSRPVRVLMTPPPPPFPPPPLLAAKLSLEEERRGDSGLKSPSSATLSPVWPAQPVPREPMACTAPLRVTTPDALQGPEVEARDSRAGLATLQLDGLPAGDLDMLVPTQDERGRPIPEWKRQVMVRKLQARLGADHPPEDQDQSQRQDSGPTAAEQATWRYSQTHQAILGPFGELLTEDDLVYLEKQINDLQLRRRCQEYESELGRLAAQLQALLPEPLVSITVNSHFLPRAPGLEDEEAPVLATELEASEEPGKAEPRGQPLPFWCSHIGRLVRSMSLLLKGMNGLAQGEEKPPSPVPQDLGKETIAGPSRSEAQREIQECGVSVRTLRGNFEFAPDLPCALNSGPCELGVRPGQCLRGCWSAPPQPRGDAMGGEPGPGDTEEASDSGISCEEAPSEAGAGPGLDLASLRKERIVMLFLGHWKKSAYTPALRTAACRTLEAQRARSRGPEAAGSPRPSSPQPSDGPRLGHLWQQRGIITHLLGTWKAIMAHVPARQLRRLSRRERGPLSPEQFLPHVDGAPVPYNSLSLDLFMLGYFQLLECDLPAEERKMRHLLCFEVFEHLGAHGWEAVRAFHKAVTDEVAAGRRAWTDGFEDIKARFFGSSQGPPWDVEPGRKLGLTPLGSLPHASLPGSGPEPAVPPRLGSDSQGSSFNSGDICGYIDRSFAFWKEKEAEMFNFGE.

ANK repeat units follow at residues 1–31 (MEAQQALVASKDGDMATLERLFEAGALRPDI), 35–64 (LGAGLVHHATRAGHLDCVKFLVQRAKLPGN), 69–99 (NGATPVHDAAATGNLAELCWLVRDAGCGLQD), 103–132 (SGVSPLHLAARFGHPALVEWLLREGHAATL), 136–166 (EGALPLHHAAVSGDLTCLKLLTAAHSSGVNQ), 170–200 (SGASPLYLACQEGHLHLAQFLVKDCGADVRL), 204–234 (DGMSSLHAAAAHGHYSLVVWLVTFTDIGLTA), 238–267 (EGATALHFAARGGHTPILDRLLLMGAPIMR), 270–299 (WGGTPLHDAAENGHMECCQTLLSHHVDPFL), and 303–332 (DGYTAIDLAEYHGHQDCAQFLREMSRPVRV). Disordered stretches follow at residues 355–383 (EERRGDSGLKSPSSATLSPVWPAQPVPRE) and 458–480 (ADHPPEDQDQSQRQDSGPTAAEQ). Basic and acidic residues predominate over residues 458-469 (ADHPPEDQDQSQ). The stretch at 502-539 (EDDLVYLEKQINDLQLRRRCQEYESELGRLAAQLQALL) forms a coiled coil. Disordered regions lie at residues 611–643 (LAQGEEKPPSPVPQDLGKETIAGPSRSEAQREI), 692–729 (PRGDAMGGEPGPGDTEEASDSGISCEEAPSEAGAGPGL), 764–794 (LEAQRARSRGPEAAGSPRPSSPQPSDGPRLG), and 951–975 (PHASLPGSGPEPAVPPRLGSDSQGS).

As to quaternary structure, interacts with MYO3A (via C-terminus). Interacts with MYO3B (via C-terminus). Expressed in inner ear hair cells. Expressed in utricle hair bundles (at protein level). Expressed in choclea (at protein level).

It localises to the cell projection. Its subcellular location is the stereocilium. Functionally, binds to but does not cross-link actin. Required for the formation and maintenance of inner ear hair cell stereocilia and staircase formation. Essential for normal hearing. This Mus musculus (Mouse) protein is Espin-like protein (Espnl).